Here is a 443-residue protein sequence, read N- to C-terminus: sn-2 acyl-lipid omega-3 desaturase (ferredoxin), chloroplastic (443 aa).

The transit peptide at 1–51 (MAGLVLSGCAIKPFSQSLPIPTKRFITNPSNINLLHPKDPIFSPNFHGFSR) directs the protein to the chloroplast. A run of 2 helical transmembrane segments spans residues 120 to 140 (MSYV…AAHL) and 143 to 163 (WLVW…LFVL). Positions 165 to 169 (HDCGH) match the Histidine box-1 motif. The short motif at 201-205 (HRTHH) is the Histidine box-2 element. Transmembrane regions (helical) follow at residues 281-301 (TICW…VGPV) and 304-324 (LKLY…VTYL). The Histidine box-3 signature appears at 368–372 (HVIHH).

This sequence belongs to the fatty acid desaturase type 1 family. In terms of tissue distribution, highly expressed in leaves and cotyledons, while no or little expression detected in mature seeds, roots and stems.

It localises to the plastid. The protein localises to the chloroplast membrane. The enzyme catalyses a (7Z,10Z)-hexadecadienoyl-containing glycerolipid + 2 reduced [2Fe-2S]-[ferredoxin] + O2 + 2 H(+) = a (7Z,10Z,13Z)-hexadecatrienoyl-containing glycerolipid + 2 oxidized [2Fe-2S]-[ferredoxin] + 2 H2O. It catalyses the reaction a (9Z,12Z)-octadecadienoyl-containing glycerolipid + 2 reduced [2Fe-2S]-[ferredoxin] + O2 + 2 H(+) = (9Z,12Z,15Z)-octadecatrienoyl-containing glycerolipid + 2 oxidized [2Fe-2S]-[ferredoxin] + 2 H2O. It participates in lipid metabolism; polyunsaturated fatty acid biosynthesis. In terms of biological role, chloroplast omega-3 fatty acid desaturase introduces the third double bond in the biosynthesis of 18:3, and probably also 16:3 fatty acids, important constituents of plant membranes. It is thought to use ferredoxin as an electron donor and to act on fatty acids esterified to galactolipids, sulfolipids and phosphatidylglycerol. The protein is sn-2 acyl-lipid omega-3 desaturase (ferredoxin), chloroplastic of Helianthus annuus (Common sunflower).